A 64-amino-acid chain; its full sequence is Small ribosomal subunit protein bS18c (64 aa).

Belongs to the bacterial ribosomal protein bS18 family. Part of the 30S ribosomal subunit.

Its subcellular location is the plastid. The protein localises to the chloroplast. The polypeptide is Small ribosomal subunit protein bS18c (rps18) (Bigelowiella natans (Pedinomonas minutissima)).